The following is a 420-amino-acid chain: Reticulon-4 receptor-like 2 (420 aa).

An N-terminal signal peptide occupies residues 1–46 (MLPGLRRLLQAPASACLLLMLLALPLAAPSCPMLCTCYSSPPTVSC). 2 disulfides stabilise this stretch: cysteine 31/cysteine 37 and cysteine 35/cysteine 46. Positions 47–60 (QANNFSSVPLSLPP) constitute an LRRNT domain. N-linked (GlcNAc...) asparagine glycosylation occurs at asparagine 50. LRR repeat units lie at residues 61 to 82 (STQR…TFGS), 83 to 104 (NLLT…TFRH), 107 to 129 (ALEE…TFQG), 132 to 153 (RLQS…IFRG), 156 to 177 (SLQY…LFAD), 180 to 201 (NLSH…VFRG), 204 to 225 (SLDR…AFRG), and 228 to 249 (RLTI…ALAD). Asparagine 93 carries N-linked (GlcNAc...) asparagine glycosylation. N-linked (GlcNAc...) asparagine glycosylation occurs at asparagine 236. The LRRCT domain maps to 261-312 (NPWACDCRARPLWAWFQRARVSSSDVTCATPPERQGRDLRALREADFQACPP). Disulfide bonds link cysteine 265/cysteine 288 and cysteine 267/cysteine 310. The segment at 308–399 (QACPPAAPTR…CQAPPDSRGP (92 aa)) is disordered. The important for interaction with MAG stretch occupies residues 315–327 (PTRPGSRARGNSS). Residues 351 to 360 (LPAEDSRGRQ) show a composition bias toward basic and acidic residues. Residue cysteine 390 is the site of GPI-anchor amidated cysteine attachment. A propeptide spans 391-420 (QAPPDSRGPALSAGLPSPLLCLLLLVPHHL) (removed in mature form).

The protein belongs to the Nogo receptor family. In terms of assembly, interaction with MAG is controversial, and may be indirect. Does not interact with MAG, OMG and RTN4. Interacts with MAG. In terms of processing, undergoes zinc metalloproteinase-mediated ectodomain shedding in neuroblastoma cells; is released both as a full-length ectodomain and an N-terminal fragment containing the leucine-rich repeat (LRR) region of the protein. Post-translationally, N-glycosylated. Highly expressed in brain and liver. Expressed at lower levels in kidney, mammary gland, placenta, skeletal muscle, spleen and thyroid.

It localises to the cell membrane. It is found in the membrane raft. The protein resides in the cell projection. Its subcellular location is the dendrite. The protein localises to the perikaryon. It localises to the axon. In terms of biological role, cell surface receptor that plays a functionally redundant role in the inhibition of neurite outgrowth mediated by MAG. Plays a functionally redundant role in postnatal brain development. Contributes to normal axon migration across the brain midline and normal formation of the corpus callosum. Does not seem to play a significant role in regulating axon regeneration in the adult central nervous system. Protects motoneurons against apoptosis; protection against apoptosis is probably mediated by MAG. Like other family members, plays a role in restricting the number dendritic spines and the number of synapses that are formed during brain development. Signaling mediates activation of Rho and downstream reorganization of the actin cytoskeleton. This chain is Reticulon-4 receptor-like 2, found in Homo sapiens (Human).